A 426-amino-acid polypeptide reads, in one-letter code: UDP-N-acetylglucosamine 1-carboxyvinyltransferase (426 aa).

22-23 (KN) is a phosphoenolpyruvate binding site. Arg93 lines the UDP-N-acetyl-alpha-D-glucosamine pocket. The active-site Proton donor is Asp117. UDP-N-acetyl-alpha-D-glucosamine-binding residues include Asp312 and Met334.

The protein belongs to the EPSP synthase family. MurA subfamily.

The protein resides in the cytoplasm. The enzyme catalyses phosphoenolpyruvate + UDP-N-acetyl-alpha-D-glucosamine = UDP-N-acetyl-3-O-(1-carboxyvinyl)-alpha-D-glucosamine + phosphate. Its pathway is cell wall biogenesis; peptidoglycan biosynthesis. In terms of biological role, cell wall formation. Adds enolpyruvyl to UDP-N-acetylglucosamine. The chain is UDP-N-acetylglucosamine 1-carboxyvinyltransferase from Treponema denticola (strain ATCC 35405 / DSM 14222 / CIP 103919 / JCM 8153 / KCTC 15104).